A 381-amino-acid chain; its full sequence is Heme A synthase (381 aa).

The segment at 1 to 23 (MARRPVFQEVTETTPPGTTPSGG) is disordered. Positions 11–23 (TETTPPGTTPSGG) are enriched in low complexity. The next 8 membrane-spanning stretches (helical) occupy residues 34 to 54 (GAIRLWLVVLFVMVAAMIALG), 120 to 140 (RLLGRLVGLVWAAGFVFFLAT), 151 to 171 (LLLLGALGGAQGAIGWWMVHS), 185 to 205 (LATHLGLAFAILGLIAWYVLA), 228 to 248 (TTGLMHLAFVQILLGALVAGI), 285 to 305 (LVQFIHRMTGYLLAVFAVVVF), 319 to 339 (AYVAMLVALAVQVALGIMNVL), and 342 to 362 (SPLPLALAHQIGAVALFTLIL). H290 contributes to the heme binding site. H350 lines the heme pocket.

Belongs to the COX15/CtaA family. Type 2 subfamily. In terms of assembly, interacts with CtaB. Requires heme b as cofactor.

The protein resides in the cell membrane. It carries out the reaction Fe(II)-heme o + 2 A + H2O = Fe(II)-heme a + 2 AH2. It functions in the pathway porphyrin-containing compound metabolism; heme A biosynthesis; heme A from heme O: step 1/1. Catalyzes the conversion of heme O to heme A by two successive hydroxylations of the methyl group at C8. The first hydroxylation forms heme I, the second hydroxylation results in an unstable dihydroxymethyl group, which spontaneously dehydrates, resulting in the formyl group of heme A. This chain is Heme A synthase, found in Paracoccus denitrificans (strain Pd 1222).